We begin with the raw amino-acid sequence, 478 residues long: Aspartyl/glutamyl-tRNA(Asn/Gln) amidotransferase subunit B (478 aa).

This sequence belongs to the GatB/GatE family. GatB subfamily. Heterotrimer of A, B and C subunits.

The catalysed reaction is L-glutamyl-tRNA(Gln) + L-glutamine + ATP + H2O = L-glutaminyl-tRNA(Gln) + L-glutamate + ADP + phosphate + H(+). It carries out the reaction L-aspartyl-tRNA(Asn) + L-glutamine + ATP + H2O = L-asparaginyl-tRNA(Asn) + L-glutamate + ADP + phosphate + 2 H(+). Its function is as follows. Allows the formation of correctly charged Asn-tRNA(Asn) or Gln-tRNA(Gln) through the transamidation of misacylated Asp-tRNA(Asn) or Glu-tRNA(Gln) in organisms which lack either or both of asparaginyl-tRNA or glutaminyl-tRNA synthetases. The reaction takes place in the presence of glutamine and ATP through an activated phospho-Asp-tRNA(Asn) or phospho-Glu-tRNA(Gln). This Syntrophotalea carbinolica (strain DSM 2380 / NBRC 103641 / GraBd1) (Pelobacter carbinolicus) protein is Aspartyl/glutamyl-tRNA(Asn/Gln) amidotransferase subunit B.